We begin with the raw amino-acid sequence, 344 residues long: ATPase GET3 (344 aa).

26 to 33 (KGGVGKTT) lines the ATP pocket. Asp-57 is an active-site residue. Glu-239 and Asn-266 together coordinate ATP. Cys-276 and Cys-279 together coordinate Zn(2+).

This sequence belongs to the arsA ATPase family. In terms of assembly, homodimer. Component of the Golgi to ER traffic (GET) complex, which is composed of GET1, GET2 and GET3. Within the complex, GET1 and GET2 form a heterotetramer which is stabilized by phosphatidylinositol binding and which binds to the GET3 homodimer. Interacts with the chloride channel protein GEF1.

The protein resides in the cytoplasm. It is found in the endoplasmic reticulum. It localises to the golgi apparatus. Its function is as follows. ATPase required for the post-translational delivery of tail-anchored (TA) proteins to the endoplasmic reticulum. Recognizes and selectively binds the transmembrane domain of TA proteins in the cytosol. This complex then targets to the endoplasmic reticulum by membrane-bound receptors GET1 and GET2, where the tail-anchored protein is released for insertion. This process is regulated by ATP binding and hydrolysis. ATP binding drives the homodimer towards the closed dimer state, facilitating recognition of newly synthesized TA membrane proteins. ATP hydrolysis is required for insertion. Subsequently, the homodimer reverts towards the open dimer state, lowering its affinity for the GET1-GET2 receptor, and returning it to the cytosol to initiate a new round of targeting. Cooperates with the HDEL receptor ERD2 to mediate the ATP-dependent retrieval of resident ER proteins that contain a C-terminal H-D-E-L retention signal from the Golgi to the ER. Involved in low-level resistance to the oxyanions arsenite and arsenate, and in heat tolerance. The protein is ATPase GET3 of Komagataella phaffii (strain GS115 / ATCC 20864) (Yeast).